Here is a 121-residue protein sequence, read N- to C-terminus: MIQQETYLNVADNSGARKLMCIRVLGSNRRYAGVGDVIIAVVKDALPNMPVKKSDVVRAVVVRTKKSLRRDSGNVIRFDDNAAVIINADGNPRGTRVFGPVARELRDRNFTKIVSLAPEVI.

This sequence belongs to the universal ribosomal protein uL14 family. As to quaternary structure, part of the 50S ribosomal subunit. Forms a cluster with proteins L3 and L19. In the 70S ribosome, L14 and L19 interact and together make contacts with the 16S rRNA in bridges B5 and B8.

Binds to 23S rRNA. Forms part of two intersubunit bridges in the 70S ribosome. The chain is Large ribosomal subunit protein uL14 from Synechococcus elongatus (strain ATCC 33912 / PCC 7942 / FACHB-805) (Anacystis nidulans R2).